A 440-amino-acid chain; its full sequence is UDP-N-acetylmuramoylalanine--D-glutamate ligase (440 aa).

G128–T134 is an ATP binding site.

Belongs to the MurCDEF family.

Its subcellular location is the cytoplasm. The enzyme catalyses UDP-N-acetyl-alpha-D-muramoyl-L-alanine + D-glutamate + ATP = UDP-N-acetyl-alpha-D-muramoyl-L-alanyl-D-glutamate + ADP + phosphate + H(+). Its pathway is cell wall biogenesis; peptidoglycan biosynthesis. Cell wall formation. Catalyzes the addition of glutamate to the nucleotide precursor UDP-N-acetylmuramoyl-L-alanine (UMA). This chain is UDP-N-acetylmuramoylalanine--D-glutamate ligase, found in Lawsonia intracellularis (strain PHE/MN1-00).